The following is a 277-amino-acid chain: Shikimate dehydrogenase (NADP(+)) (277 aa).

Residues 15–17 and Thr-62 contribute to the shikimate site; that span reads SLS. The Proton acceptor role is filled by Lys-66. Shikimate is bound by residues Asn-87 and Asp-102. NADP(+) contacts are provided by residues 127 to 131, 151 to 156, and Ile-219; these read GAGGA and NRTRDK. Tyr-221 is a shikimate binding site. Gly-242 is a binding site for NADP(+).

Belongs to the shikimate dehydrogenase family. Homodimer.

It catalyses the reaction shikimate + NADP(+) = 3-dehydroshikimate + NADPH + H(+). It participates in metabolic intermediate biosynthesis; chorismate biosynthesis; chorismate from D-erythrose 4-phosphate and phosphoenolpyruvate: step 4/7. Its function is as follows. Involved in the biosynthesis of the chorismate, which leads to the biosynthesis of aromatic amino acids. Catalyzes the reversible NADPH linked reduction of 3-dehydroshikimate (DHSA) to yield shikimate (SA). The protein is Shikimate dehydrogenase (NADP(+)) of Bacillus mycoides (strain KBAB4) (Bacillus weihenstephanensis).